Consider the following 59-residue polypeptide: Large ribosomal subunit protein uL30 (59 aa).

It belongs to the universal ribosomal protein uL30 family. As to quaternary structure, part of the 50S ribosomal subunit.

The sequence is that of Large ribosomal subunit protein uL30 from Staphylococcus epidermidis (strain ATCC 12228 / FDA PCI 1200).